Consider the following 388-residue polypeptide: MEKQAEKQLEKQLESFILHLKRKTVVGSYQVSRASAELLRQWVHKGKWGNAKSLIDQIKIIGKKLMNAQPLEFCIGNIVRRVLFIIREEYLTFFRNKKNGLNNDDYDDDDFETTTSNNNNNNNNNNINSSSNINKNNKYSNVMLQDDPIDDQEDIDFTETFPRLKAAIMDSINELIDELEGLHRNVAEQAIEHIHSNETIMTLGCSRTVEEFLKEAARKRSFKVIVVETAPSLEGQKTAISLSKASIDTTLITDSAVFAMMSRVNKVIIGTHAVMANGGLIATSGTHTLAVAAKYHSVPIVVCTGLYKLCPLYAYDQDTFNNFGSPGEYLKFEEAEFLENVHSYNPTFDYVAPDLVSLFITNIGGHNPSYIYRLLQEYYDARDILEDE.

Residues 109–133 form a disordered region; sequence DDFETTTSNNNNNNNNNNINSSSNI. Positions 116 to 133 are enriched in low complexity; that stretch reads SNNNNNNNNNNINSSSNI.

It belongs to the eIF-2B alpha/beta/delta subunits family. As to quaternary structure, component of the translation initiation factor 2B (eIF2B) complex which is a heterodecamer of two sets of five different subunits: alpha, beta, gamma, delta and epsilon. Subunits alpha, beta and delta comprise a regulatory subcomplex and subunits epsilon and gamma comprise a catalytic subcomplex. Within the complex, the hexameric regulatory complex resides at the center, with the two heterodimeric catalytic subcomplexes bound on opposite sides.

Its subcellular location is the cytoplasm. The protein localises to the cytosol. Its function is as follows. Acts as a component of the translation initiation factor 2B (eIF2B) complex, which catalyzes the exchange of GDP for GTP on eukaryotic initiation factor 2 (eIF2) gamma subunit. Its guanine nucleotide exchange factor activity is repressed when bound to eIF2 complex phosphorylated on the alpha subunit, thereby limiting the amount of methionyl-initiator methionine tRNA available to the ribosome and consequently global translation is repressed. This chain is Translation initiation factor eIF2B subunit beta (eif2b2), found in Dictyostelium discoideum (Social amoeba).